The primary structure comprises 199 residues: Large ribosomal subunit protein bL25 (199 aa).

The disordered stretch occupies residues 1 to 21 (MNIEKTLSVQKREGYGKGPSG).

Belongs to the bacterial ribosomal protein bL25 family. CTC subfamily. Part of the 50S ribosomal subunit; part of the 5S rRNA/L5/L18/L25 subcomplex. Contacts the 5S rRNA. Binds to the 5S rRNA independently of L5 and L18.

In terms of biological role, this is one of the proteins that binds to the 5S RNA in the ribosome where it forms part of the central protuberance. The chain is Large ribosomal subunit protein bL25 from Desulfovibrio desulfuricans (strain ATCC 27774 / DSM 6949 / MB).